A 1939-amino-acid chain; its full sequence is Myosin-2 (1939 aa).

The Myosin N-terminal SH3-like domain occupies 33–82; it reads DAKTSVFVAEPKESFVKGTIQSREGGKVTVKTEAGATLTVKEDQVFPMNP. Thr64 and Thr69 each carry phosphothreonine. Residues 86–782 enclose the Myosin motor domain; it reads DKIEDMAMMT…LLGLLEEMRD (697 aa). Lys130 is modified (N6,N6,N6-trimethyllysine). 179-186 is a binding site for ATP; that stretch reads GESGAGKT. Tyr389 carries the phosphotyrosine modification. The residue at position 392 (Ser392) is a Phosphoserine. Thr419 bears the Phosphothreonine mark. Ser625 carries the post-translational modification Phosphoserine. An actin-binding region spans residues 659 to 681; it reads LNKLMTNLRSTHPHFVRCIIPNE. Position 757 is a pros-methylhistidine (His757). The segment at 761-775 is actin-binding; the sequence is KFGHTKVFFKAGLLG. In terms of domain architecture, IQ spans 785–814; it reads LAQLITRTQARCRGFLARVEYQKMVERRES. A coiled-coil region spans residues 843 to 1939; sequence LLKSAESEKE…EVHTKVISEE (1097 aa). 2 positions are modified to phosphoserine: Ser1092 and Ser1096. Disordered regions lie at residues 1126–1147 and 1153–1172; these read IEAERASRAKAEKQRSDLSREL and RLEEAGGATSAQIEMNKKRE. Positions 1128–1147 are enriched in basic and acidic residues; sequence AERASRAKAEKQRSDLSREL. Phosphoserine occurs at positions 1162 and 1237. Thr1241 is modified (phosphothreonine). Position 1243 is a phosphoserine (Ser1243). At Thr1255 the chain carries Phosphothreonine. At Ser1261 the chain carries Phosphoserine. Thr1286 carries the phosphothreonine modification. A phosphoserine mark is found at Ser1288, Ser1292, Ser1303, and Ser1306. Tyr1464 is subject to Phosphotyrosine. Thr1467 carries the post-translational modification Phosphothreonine. The residue at position 1474 (Ser1474) is a Phosphoserine. Tyr1492 bears the Phosphotyrosine mark. Ser1495 bears the Phosphoserine mark. A Phosphothreonine modification is found at Thr1501. Phosphoserine is present on Ser1514. A Phosphothreonine modification is found at Thr1517. Ser1542, Ser1554, Ser1574, Ser1600, Ser1603, Ser1714, and Ser1726 each carry phosphoserine. Residues Thr1730 and Thr1736 each carry the phosphothreonine modification. Ser1739 carries the phosphoserine modification. The interval 1885–1915 is disordered; that stretch reads QAEEAEEQSNTNLSKFRKLQHELEEAEERAD.

The protein belongs to the TRAFAC class myosin-kinesin ATPase superfamily. Myosin family. As to quaternary structure, muscle myosin is a hexameric protein that consists of 2 heavy chain subunits (MHC), 2 alkali light chain subunits (MLC) and 2 regulatory light chain subunits (MLC-2). Interacts with GCSAM.

It localises to the cytoplasm. It is found in the myofibril. In terms of biological role, myosins are actin-based motor molecules with ATPase activity essential for muscle contraction. In Sus scrofa (Pig), this protein is Myosin-2 (MYH2).